Here is a 246-residue protein sequence, read N- to C-terminus: Acetoacetate decarboxylase (246 aa).

Lys-116 functions as the Schiff-base intermediate with acetoacetate in the catalytic mechanism.

This sequence belongs to the ADC family.

The catalysed reaction is acetoacetate + H(+) = acetone + CO2. Its function is as follows. Catalyzes the conversion of acetoacetate to acetone and carbon dioxide. This Burkholderia multivorans (strain ATCC 17616 / 249) protein is Acetoacetate decarboxylase.